A 508-amino-acid polypeptide reads, in one-letter code: Probable cytosol aminopeptidase (508 aa).

Mn(2+) contacts are provided by lysine 276 and aspartate 281. Lysine 288 is an active-site residue. Aspartate 299, aspartate 358, and glutamate 360 together coordinate Mn(2+). Residue arginine 362 is part of the active site.

It belongs to the peptidase M17 family. The cofactor is Mn(2+).

Its subcellular location is the cytoplasm. It carries out the reaction Release of an N-terminal amino acid, Xaa-|-Yaa-, in which Xaa is preferably Leu, but may be other amino acids including Pro although not Arg or Lys, and Yaa may be Pro. Amino acid amides and methyl esters are also readily hydrolyzed, but rates on arylamides are exceedingly low.. The enzyme catalyses Release of an N-terminal amino acid, preferentially leucine, but not glutamic or aspartic acids.. In terms of biological role, presumably involved in the processing and regular turnover of intracellular proteins. Catalyzes the removal of unsubstituted N-terminal amino acids from various peptides. The chain is Probable cytosol aminopeptidase from Chlorobium luteolum (strain DSM 273 / BCRC 81028 / 2530) (Pelodictyon luteolum).